A 228-amino-acid polypeptide reads, in one-letter code: 2-C-methyl-D-erythritol 4-phosphate cytidylyltransferase (228 aa).

The protein belongs to the IspD/TarI cytidylyltransferase family. IspD subfamily.

It carries out the reaction 2-C-methyl-D-erythritol 4-phosphate + CTP + H(+) = 4-CDP-2-C-methyl-D-erythritol + diphosphate. It functions in the pathway isoprenoid biosynthesis; isopentenyl diphosphate biosynthesis via DXP pathway; isopentenyl diphosphate from 1-deoxy-D-xylulose 5-phosphate: step 2/6. Catalyzes the formation of 4-diphosphocytidyl-2-C-methyl-D-erythritol from CTP and 2-C-methyl-D-erythritol 4-phosphate (MEP). The polypeptide is 2-C-methyl-D-erythritol 4-phosphate cytidylyltransferase (Crocosphaera subtropica (strain ATCC 51142 / BH68) (Cyanothece sp. (strain ATCC 51142))).